Here is a 721-residue protein sequence, read N- to C-terminus: Far upstream element-binding protein 2 (721 aa).

Positions 1 to 148 (MSDYSTGGPP…HPPPRTSMTE (148 aa)) are disordered. At serine 2 the chain carries N-acetylserine. Positions 8 to 17 (GPPPGPPPPA) are enriched in pro residues. Composition is skewed to gly residues over residues 18-28 (GGGGGAAGAGG) and 36-69 (GAGD…GGPG). Arginine 40 carries the post-translational modification Omega-N-methylarginine. At lysine 88 the chain carries N6-acetyllysine. Threonine 101 carries the phosphothreonine modification. The segment covering 111 to 123 (RQLEDGDQPDSKK) has biased composition (basic and acidic residues). A Glycyl lysine isopeptide (Lys-Gly) (interchain with G-Cter in SUMO1); alternate cross-link involves residue lysine 122. Lysine 122 participates in a covalent cross-link: Glycyl lysine isopeptide (Lys-Gly) (interchain with G-Cter in SUMO2); alternate. Phosphoserine occurs at positions 126, 130, 182, 185, 194, and 275. KH domains follow at residues 145–209 (SMTE…KMML), 234–300 (GTVQ…CEMV), and 323–387 (GGGI…ARII). Residues 394–422 (LRSGPPGPPGAPGMPPGGRGRGRGQGNWG) form a disordered region. The span at 398 to 408 (PPGPPGAPGMP) shows a compositional bias: pro residues. The span at 409 to 422 (PGGRGRGRGQGNWG) shows a compositional bias: gly residues. Residues arginine 412, arginine 414, arginine 416, and arginine 443 each carry the omega-N-methylarginine modification. Residues 425-492 (GGEMTFSIPT…QQIDHAKQLI (68 aa)) enclose the KH 4 domain. Position 481 is a phosphoserine (serine 481). The segment at 498-570 (GPLCPVGPGP…HDPNKAAAAA (73 aa)) is disordered. Composition is skewed to pro residues over residues 502–521 (PVGP…PFHP) and 529–543 (PGAP…PHQY). Residues 572–583 (DPNAAWAAYYSH) form repeat 1. Residues 572–685 (DPNAAWAAYY…SAAWAEYYRQ (114 aa)) form a 4 X 12 AA imperfect repeats region. Residues 588–614 (PPGPVPGPAPAPAAPPAQGEPPQPPPT) show a composition bias toward pro residues. Disordered regions lie at residues 588 to 650 (PPGP…KAWE), 659 to 678 (VATG…YSAA), and 688 to 721 (AYYG…ELHL). Tandem repeats lie at residues 618–629 (DYTKAWEEYYKK), 644–655 (DYTKAWEEYYKK), and 674–685 (DYSAAWAEYYRQ).

It belongs to the KHSRP family. Part of a ternary complex containing FUBP2, PTBP1, PTBP2 and HNRPH1. Interacts with PARN. Interacts with PQBP1.

The protein resides in the nucleus. Its subcellular location is the cytoplasm. In terms of biological role, part of a ternary complex that binds to the downstream control sequence (DCS) of the pre-mRNA. Mediates exon inclusion in transcripts that are subject to tissue-specific alternative splicing. May interact with single-stranded DNA from the far-upstream element (FUSE). May activate gene expression. Also involved in degradation of inherently unstable mRNAs that contain AU-rich elements (AREs) in their 3'-UTR, possibly by recruiting degradation machinery to ARE-containing mRNAs. Binds to the dendritic targeting element and may play a role in mRNA trafficking. This chain is Far upstream element-binding protein 2 (Khsrp), found in Rattus norvegicus (Rat).